The chain runs to 1396 residues: Sterol 3-beta-glucosyltransferase (1396 aa).

The segment covering 1 to 16 (MRPLLDEAKRRVDRRL) has biased composition (basic and acidic residues). Disordered regions lie at residues 1–59 (MRPL…TKEG), 82–193 (HARF…AAPV), and 206–233 (SKGS…TSAS). Residues 18-28 (ASRQSLSTSRI) are compositionally biased toward polar residues. Composition is skewed to basic and acidic residues over residues 35-44 (ERLKDDHDAQ) and 82-108 (HARF…KESQ). A compositionally biased stretch (polar residues) spans 156 to 175 (GSSQRQGGAQTEPSTGNQMS). In terms of domain architecture, GRAM 1 spans 237–288 (LRLMEMFGFESPEKVLVEYACSLVQSMLLQGYMYVTEGHICFYAYLPRKSTV). Residues 289-387 (AIKSGYLYKR…WVKSLQKVIF (99 aa)) form the PH domain. Polar residues-rich tracts occupy residues 459–479 (QAKN…QSRA) and 487–497 (SLTSGLSQVLG). Disordered stretches follow at residues 459 to 531 (QAKN…RDLS) and 576 to 635 (FRRQ…VQQS). Positions 585–595 (QFGRRHSDETA) are enriched in basic and acidic residues. In terms of domain architecture, GRAM 2 spans 719–785 (DRFRAHFALP…KDVENVEKEK (67 aa)). The disordered stretch occupies residues 841–880 (EQDESEAAKAEHRMLQEARKDASGGLIPQTPSDESPEIHP). The segment covering 846-862 (EAAKAEHRMLQEARKDA) has biased composition (basic and acidic residues). UDP-alpha-D-glucose contacts are provided by Ser907, Arg908, Asp910, Ala1210, His1212, His1225, Gly1229, Thr1230, Asp1249, and Gln1250.

It belongs to the glycosyltransferase 28 family.

The protein resides in the cytoplasm. It is found in the preautophagosomal structure membrane. It catalyses the reaction a sterol + UDP-alpha-D-glucose = a sterol 3-beta-D-glucoside + UDP + H(+). It carries out the reaction ergosterol + UDP-alpha-D-glucose = ergosteryl 3-beta-D-glucoside + UDP + H(+). Its function is as follows. Sterol glycosyltransferase responsible for the glycosylation of ergosterol to form ergosterol-glucoside. The polypeptide is Sterol 3-beta-glucosyltransferase (Aspergillus terreus (strain NIH 2624 / FGSC A1156)).